Consider the following 363-residue polypeptide: Histidinol-phosphate aminotransferase (363 aa).

An N6-(pyridoxal phosphate)lysine modification is found at Lys215.

It belongs to the class-II pyridoxal-phosphate-dependent aminotransferase family. Histidinol-phosphate aminotransferase subfamily. In terms of assembly, homodimer. The cofactor is pyridoxal 5'-phosphate.

The enzyme catalyses L-histidinol phosphate + 2-oxoglutarate = 3-(imidazol-4-yl)-2-oxopropyl phosphate + L-glutamate. The protein operates within amino-acid biosynthesis; L-histidine biosynthesis; L-histidine from 5-phospho-alpha-D-ribose 1-diphosphate: step 7/9. The chain is Histidinol-phosphate aminotransferase from Buchnera aphidicola subsp. Diuraphis noxia.